Here is a 194-residue protein sequence, read N- to C-terminus: Protein GrpE (194 aa).

Residues Met1–Gln12 are compositionally biased toward polar residues. Residues Met1–Glu39 are disordered.

This sequence belongs to the GrpE family. In terms of assembly, homodimer.

Its subcellular location is the cytoplasm. In terms of biological role, participates actively in the response to hyperosmotic and heat shock by preventing the aggregation of stress-denatured proteins, in association with DnaK and GrpE. It is the nucleotide exchange factor for DnaK and may function as a thermosensor. Unfolded proteins bind initially to DnaJ; upon interaction with the DnaJ-bound protein, DnaK hydrolyzes its bound ATP, resulting in the formation of a stable complex. GrpE releases ADP from DnaK; ATP binding to DnaK triggers the release of the substrate protein, thus completing the reaction cycle. Several rounds of ATP-dependent interactions between DnaJ, DnaK and GrpE are required for fully efficient folding. The sequence is that of Protein GrpE from Erwinia tasmaniensis (strain DSM 17950 / CFBP 7177 / CIP 109463 / NCPPB 4357 / Et1/99).